A 146-amino-acid chain; its full sequence is ATP synthase epsilon chain (146 aa).

Positions 92–116 are enriched in basic and acidic residues; sequence ISVDQARRDRDSLRKKLNEHERSEQ. The interval 92-120 is disordered; that stretch reads ISVDQARRDRDSLRKKLNEHERSEQDPEV.

This sequence belongs to the ATPase epsilon chain family. As to quaternary structure, F-type ATPases have 2 components, CF(1) - the catalytic core - and CF(0) - the membrane proton channel. CF(1) has five subunits: alpha(3), beta(3), gamma(1), delta(1), epsilon(1). CF(0) has three main subunits: a, b and c.

It localises to the cell membrane. Produces ATP from ADP in the presence of a proton gradient across the membrane. The polypeptide is ATP synthase epsilon chain (Cutibacterium acnes (strain DSM 16379 / KPA171202) (Propionibacterium acnes)).